The primary structure comprises 239 residues: Ribonuclease PH (239 aa).

Residues Arg87 and 125–127 each bind phosphate; that span reads GTR.

Belongs to the RNase PH family. As to quaternary structure, homohexameric ring arranged as a trimer of dimers.

It catalyses the reaction tRNA(n+1) + phosphate = tRNA(n) + a ribonucleoside 5'-diphosphate. In terms of biological role, phosphorolytic 3'-5' exoribonuclease that plays an important role in tRNA 3'-end maturation. Removes nucleotide residues following the 3'-CCA terminus of tRNAs; can also add nucleotides to the ends of RNA molecules by using nucleoside diphosphates as substrates, but this may not be physiologically important. Probably plays a role in initiation of 16S rRNA degradation (leading to ribosome degradation) during starvation. This is Ribonuclease PH from Acaryochloris marina (strain MBIC 11017).